A 454-amino-acid polypeptide reads, in one-letter code: Glycosyl hydrolase family 109 protein (454 aa).

The tat-type signal signal peptide spans methionine 1–alanine 29. NAD(+) contacts are provided by residues methionine 43–arginine 44, aspartate 65, tryptophan 116–histidine 119, glutamate 136–valine 137, and asparagine 165. Position 194 (tyrosine 194) interacts with substrate. Serine 224–tryptophan 228 is an NAD(+) binding site. Residues arginine 229, tyrosine 241 to histidine 244, and tyrosine 324 contribute to the substrate site. Residue tyrosine 241 participates in NAD(+) binding.

Belongs to the Gfo/Idh/MocA family. Glycosyl hydrolase 109 subfamily. The cofactor is NAD(+). In terms of processing, predicted to be exported by the Tat system. The position of the signal peptide cleavage has not been experimentally proven.

Glycosidase. The chain is Glycosyl hydrolase family 109 protein from Stenotrophomonas maltophilia (strain K279a).